The primary structure comprises 498 residues: Sulfate adenylyltransferase subunit 1 (498 aa).

In terms of domain architecture, tr-type G spans 30-246 (TRPLRLITCG…LELATTRSAQ (217 aa)). A G1 region spans residues 39 to 46 (GSVDDGKS). Position 39–46 (39–46 (GSVDDGKS)) interacts with GTP. Residues 97–101 (GITID) form a G2 region. The interval 118–121 (DTPG) is G3. GTP contacts are provided by residues 118–122 (DTPGH) and 173–176 (NKID). The interval 173–176 (NKID) is G4. The segment at 210–212 (SAL) is G5.

This sequence belongs to the TRAFAC class translation factor GTPase superfamily. Classic translation factor GTPase family. CysN/NodQ subfamily. As to quaternary structure, heterodimer composed of CysD, the smaller subunit, and CysN.

The catalysed reaction is sulfate + ATP + H(+) = adenosine 5'-phosphosulfate + diphosphate. It participates in sulfur metabolism; hydrogen sulfide biosynthesis; sulfite from sulfate: step 1/3. With CysD forms the ATP sulfurylase (ATPS) that catalyzes the adenylation of sulfate producing adenosine 5'-phosphosulfate (APS) and diphosphate, the first enzymatic step in sulfur assimilation pathway. APS synthesis involves the formation of a high-energy phosphoric-sulfuric acid anhydride bond driven by GTP hydrolysis by CysN coupled to ATP hydrolysis by CysD. The chain is Sulfate adenylyltransferase subunit 1 from Rhizobium meliloti (strain 1021) (Ensifer meliloti).